Reading from the N-terminus, the 475-residue chain is Ankyrin repeat, SAM and basic leucine zipper domain-containing protein 1 (475 aa).

The tract at residues 1 to 38 (MATGSLRGLAVAGGGESSDSEDDGWEIGYLDRPPQKLK) is disordered. Phosphoserine occurs at positions 17, 18, and 20. ANK repeat units follow at residues 45–74 (EKNE…SVDS), 78–107 (YGWT…NASF), 110–144 (DKQT…DPNV), 148–177 (RLMT…EVNI), 181–210 (NGYT…NKTL), and 214–243 (DGKT…PLEG). The SAM domain maps to 272-334 (SYTAFGDLEI…KILAALKELE (63 aa)).

As to quaternary structure, interacts with DDX4, PIWIL1, RANBP9 and TDRD1.

Its subcellular location is the cytoplasm. Functionally, plays a central role during spermatogenesis by repressing transposable elements and preventing their mobilization, which is essential for the germline integrity. Acts via the piRNA metabolic process, which mediates the repression of transposable elements during meiosis by forming complexes composed of piRNAs and Piwi proteins and governs the methylation and subsequent repression of transposons. Its association with pi-bodies suggests a participation in the primary piRNAs metabolic process. Required prior to the pachytene stage to facilitate the production of multiple types of piRNAs, including those associated with repeats involved in the regulation of retrotransposons. May act by mediating protein-protein interactions during germ cell maturation. This chain is Ankyrin repeat, SAM and basic leucine zipper domain-containing protein 1 (ASZ1), found in Oryctolagus cuniculus (Rabbit).